Consider the following 369-residue polypeptide: Glutamate 5-kinase (369 aa).

Position 14 (K14) interacts with ATP. Residues S54, D141, and N153 each coordinate substrate. ATP-binding positions include 173–174 (SD) and 215–221 (TGGMVTK). The PUA domain occupies 277-355 (RGRLHLDPGA…SELATALGPA (79 aa)).

This sequence belongs to the glutamate 5-kinase family.

Its subcellular location is the cytoplasm. The enzyme catalyses L-glutamate + ATP = L-glutamyl 5-phosphate + ADP. The protein operates within amino-acid biosynthesis; L-proline biosynthesis; L-glutamate 5-semialdehyde from L-glutamate: step 1/2. Catalyzes the transfer of a phosphate group to glutamate to form L-glutamate 5-phosphate. The sequence is that of Glutamate 5-kinase from Salinispora arenicola (strain CNS-205).